A 1997-amino-acid polypeptide reads, in one-letter code: Chromatin-remodeling ATPase INO80 (1997 aa).

3 disordered regions span residues 1–378 (MDHF…AAPS), 397–579 (IAAP…AENE), and 674–858 (ERKK…EKVV). A compositionally biased stretch (basic and acidic residues) spans 12–25 (PHFDEDGTEGRGDR). Residues 32 to 41 (GPAPPPPPPR) are compositionally biased toward pro residues. Residues 49 to 64 (NPVSSNSAVQSQAAAA) show a composition bias toward low complexity. Positions 89–107 (STNSMRATPHSSSSFNLRS) are enriched in polar residues. The segment covering 108–117 (PTREPSEYRH) has biased composition (basic and acidic residues). 3 stretches are compositionally biased toward low complexity: residues 118–156 (PLSSLATPAPFAASPPTSIANANNTNNNNALGAAGSLSS), 203–230 (SLQAPPAITPIAGLSAPAPASGSLPLSA), and 240–251 (SSSSQPPARASQ). Residues 264 to 276 (SFRDRDSSVREKS) are compositionally biased toward basic and acidic residues. Residues 288 to 297 (EASNGISGSS) are compositionally biased toward polar residues. Basic and acidic residues predominate over residues 298-317 (PRKDRDRDRDHRGTTRESQR). Polar residues-rich tracts occupy residues 318–340 (RSVSGHSDTGSSWRNATQTSASN) and 366–378 (VDNTTSSSIAAPS). Low complexity predominate over residues 411–420 (SPRLSLRPPS). 3 stretches are compositionally biased toward polar residues: residues 433–442 (NPTNGTTSTA), 451–465 (SPPSKMSPGTSTNPS), and 472–481 (SFSNILSSSE). Composition is skewed to basic and acidic residues over residues 500–519 (VPMKVERADSSEKVVKEKKE) and 529–540 (RISDIRHSESTP). A coiled-coil region spans residues 666-735 (ERELFAEKER…VQQTRLILQK (70 aa)). Residues 689–707 (MATTMEAKAAALARASAAQ) are compositionally biased toward low complexity. Over residues 709 to 723 (EAERQKYMREAERAN) the composition is skewed to basic and acidic residues. Basic residues predominate over residues 769–781 (TKGKGRAGARPKK). A compositionally biased stretch (basic and acidic residues) spans 782–793 (SKEQKQAEKDAA). The segment covering 794 to 806 (EAAQAALDAGLEL) has biased composition (low complexity). A compositionally biased stretch (basic and acidic residues) spans 824–858 (APKEADVDKDKENKEPQEPKEPKEPKEKVIKEKVV). The 126-residue stretch at 881 to 1006 (IWRDLARKDV…SHFIGKKIKT (126 aa)) folds into the DBINO domain. Residues 1130–1302 (VNLYEQGING…WALLHFIMPS (173 aa)) enclose the Helicase ATP-binding domain. An ATP-binding site is contributed by 1143 to 1150 (DEMGLGKT). Residues 1253-1256 (DEAQ) carry the DEAQ box motif. Residues 1702-1858 (KLDELLRELK…GSSAAGGGVD (157 aa)) form the Helicase C-terminal domain. Residues 1891–1902 (ELLESGELDKMQ) are compositionally biased toward basic and acidic residues. The tract at residues 1891-1986 (ELLESGELDK…GSKKAKTTKQ (96 aa)) is disordered. Positions 1903–1914 (KKSRGGNKRKRG) are enriched in basic residues. The segment covering 1919 to 1933 (EGKEVSLDEMYHEGE) has biased composition (basic and acidic residues). Gly residues predominate over residues 1954 to 1967 (AAGGEGGDGKGAVG). A compositionally biased stretch (basic residues) spans 1970–1985 (AKKRKTGGSKKAKTTK).

This sequence belongs to the SNF2/RAD54 helicase family. Component of the INO80 chromatin-remodeling complex.

The protein resides in the nucleus. The catalysed reaction is ATP + H2O = ADP + phosphate + H(+). Its function is as follows. ATPase component of the INO80 complex which remodels chromatin by shifting nucleosomes and is involved in DNA repair. This Neurospora crassa (strain ATCC 24698 / 74-OR23-1A / CBS 708.71 / DSM 1257 / FGSC 987) protein is Chromatin-remodeling ATPase INO80 (crf2-1).